A 1429-amino-acid chain; its full sequence is Autophagy-related protein 11 (1429 aa).

The tract at residues 71–99 is disordered; the sequence is TQRSQPGASSPPLSELPLPRYNAHTPPNS. Residues 80 to 89 show a composition bias toward low complexity; that stretch reads SPPLSELPLP. Coiled-coil stretches lie at residues 143 to 173, 553 to 590, 632 to 815, and 851 to 989; these read VMLR…KEWS, DDLL…QTQA, LETL…LEDI, and EGDM…RLES. The interval 1024-1061 is disordered; the sequence is DGTMHIQRTPRSERSLATTANPNDSDPSSSLRRSSTLN. The span at 1042–1061 shows a compositional bias: low complexity; the sequence is TANPNDSDPSSSLRRSSTLN. The stretch at 1105 to 1143 forms a coiled coil; that stretch reads ADAVYRRVKDVEHMARKLQREARAYREKAHSFQKEAHDK. Residues 1209 to 1229 are compositionally biased toward basic and acidic residues; it reads SKSLQHDQAGETRKDGARGET. Disordered stretches follow at residues 1209-1241 and 1336-1429; these read SKSL…DNPF and SSRG…LIGP. The segment covering 1230-1239 has biased composition (acidic residues); sequence ESLDDDENDN. 2 stretches are compositionally biased toward polar residues: residues 1345–1372 and 1383–1393; these read ASET…QHMS and QETPQQTNSIS.

This sequence belongs to the ATG11 family. In terms of assembly, homodimer.

It is found in the preautophagosomal structure membrane. It localises to the vacuole membrane. Involved in cytoplasm to vacuole transport (Cvt), pexophagy, mitophagy and nucleophagy. Recruits mitochondria for their selective degradation via autophagy (mitophagy) during starvation. Works as scaffold proteins that recruit ATG proteins to the pre-autophagosome (PAS), the site of vesicle/autophagosome formation. Required for the Cvt vesicles completion. This is Autophagy-related protein 11 (apg-8) from Neurospora crassa (strain ATCC 24698 / 74-OR23-1A / CBS 708.71 / DSM 1257 / FGSC 987).